A 286-amino-acid polypeptide reads, in one-letter code: 4-hydroxybenzoate octaprenyltransferase (286 aa).

The next 7 helical transmembrane spans lie at 21 to 40 (GTLL…AGGM), 96 to 116 (LFVI…GLVV), 142 to 162 (FLGV…TGEV), 167 to 187 (WWLF…YAMV), 210 to 230 (QIIG…GWSA), 235 to 255 (LYGL…MLIF), and 266 to 286 (FLNN…DYLF).

It belongs to the UbiA prenyltransferase family. Mg(2+) serves as cofactor.

The protein resides in the cell inner membrane. The enzyme catalyses all-trans-octaprenyl diphosphate + 4-hydroxybenzoate = 4-hydroxy-3-(all-trans-octaprenyl)benzoate + diphosphate. The protein operates within cofactor biosynthesis; ubiquinone biosynthesis. In terms of biological role, catalyzes the prenylation of para-hydroxybenzoate (PHB) with an all-trans polyprenyl group. Mediates the second step in the final reaction sequence of ubiquinone-8 (UQ-8) biosynthesis, which is the condensation of the polyisoprenoid side chain with PHB, generating the first membrane-bound Q intermediate 3-octaprenyl-4-hydroxybenzoate. The polypeptide is 4-hydroxybenzoate octaprenyltransferase (Shewanella sp. (strain MR-4)).